Reading from the N-terminus, the 190-residue chain is dCTP deaminase (190 aa).

Residue 107 to 112 (KSTYAR) coordinates dCTP. E133 serves as the catalytic Proton donor/acceptor. DCTP-binding residues include Q152, Y166, and Q176.

Belongs to the dCTP deaminase family. As to quaternary structure, homotrimer.

It carries out the reaction dCTP + H2O + H(+) = dUTP + NH4(+). The protein operates within pyrimidine metabolism; dUMP biosynthesis; dUMP from dCTP (dUTP route): step 1/2. Functionally, catalyzes the deamination of dCTP to dUTP. This is dCTP deaminase from Campylobacter hominis (strain ATCC BAA-381 / DSM 21671 / CCUG 45161 / LMG 19568 / NCTC 13146 / CH001A).